Consider the following 142-residue polypeptide: MAKKVTGYLKLQVPAGAANPSPPIGPALGQRGLNIMEFCKAFNAQTQKEEKNTPIPVVITIYADRSFTFEMKTPPMSFFLKQAANVKSGSKLPGRDVAGKVTSAQVREIAERKMKDLNCDSIEAAMKMVEGSARSMGLQVAG.

Belongs to the universal ribosomal protein uL11 family. Part of the ribosomal stalk of the 50S ribosomal subunit. Interacts with L10 and the large rRNA to form the base of the stalk. L10 forms an elongated spine to which L12 dimers bind in a sequential fashion forming a multimeric L10(L12)X complex. Post-translationally, one or more lysine residues are methylated.

Functionally, forms part of the ribosomal stalk which helps the ribosome interact with GTP-bound translation factors. The protein is Large ribosomal subunit protein uL11 of Rhodopseudomonas palustris (strain BisB18).